We begin with the raw amino-acid sequence, 381 residues long: Dual-specificity RNA methyltransferase RlmN (381 aa).

Catalysis depends on glutamate 86, which acts as the Proton acceptor. One can recognise a Radical SAM core domain in the interval 105–338 (RHARYTICVS…CTIRQSKGLD (234 aa)). The cysteines at positions 112 and 343 are disulfide-linked. Positions 119, 123, and 126 each coordinate [4Fe-4S] cluster. Residues 169–170 (GE), serine 201, 224–226 (SLH), and asparagine 300 contribute to the S-adenosyl-L-methionine site. Catalysis depends on cysteine 343, which acts as the S-methylcysteine intermediate. Residues 351 to 381 (ENPKFRANVSGNSAAKTEEKPTNDKTNVSKK) form a disordered region.

This sequence belongs to the radical SAM superfamily. RlmN family. [4Fe-4S] cluster serves as cofactor.

The protein localises to the cytoplasm. The enzyme catalyses adenosine(2503) in 23S rRNA + 2 reduced [2Fe-2S]-[ferredoxin] + 2 S-adenosyl-L-methionine = 2-methyladenosine(2503) in 23S rRNA + 5'-deoxyadenosine + L-methionine + 2 oxidized [2Fe-2S]-[ferredoxin] + S-adenosyl-L-homocysteine. It carries out the reaction adenosine(37) in tRNA + 2 reduced [2Fe-2S]-[ferredoxin] + 2 S-adenosyl-L-methionine = 2-methyladenosine(37) in tRNA + 5'-deoxyadenosine + L-methionine + 2 oxidized [2Fe-2S]-[ferredoxin] + S-adenosyl-L-homocysteine. In terms of biological role, specifically methylates position 2 of adenine 2503 in 23S rRNA and position 2 of adenine 37 in tRNAs. m2A2503 modification seems to play a crucial role in the proofreading step occurring at the peptidyl transferase center and thus would serve to optimize ribosomal fidelity. The polypeptide is Dual-specificity RNA methyltransferase RlmN (Campylobacter concisus (strain 13826)).